We begin with the raw amino-acid sequence, 411 residues long: 1-deoxy-D-xylulose 5-phosphate reductoisomerase (411 aa).

Residues Thr11, Gly12, Ser13, Ile14, and Asn124 each coordinate NADPH. 1-deoxy-D-xylulose 5-phosphate is bound at residue Lys125. Residue Glu126 coordinates NADPH. Asp150 is a Mn(2+) binding site. Ser151, Glu152, Ser186, and His209 together coordinate 1-deoxy-D-xylulose 5-phosphate. Glu152 contacts Mn(2+). Gly215 provides a ligand contact to NADPH. Residues Ser222, Asn227, Lys228, and Glu231 each contribute to the 1-deoxy-D-xylulose 5-phosphate site. Glu231 contacts Mn(2+).

This sequence belongs to the DXR family. Mg(2+) is required as a cofactor. Requires Mn(2+) as cofactor.

The catalysed reaction is 2-C-methyl-D-erythritol 4-phosphate + NADP(+) = 1-deoxy-D-xylulose 5-phosphate + NADPH + H(+). It participates in isoprenoid biosynthesis; isopentenyl diphosphate biosynthesis via DXP pathway; isopentenyl diphosphate from 1-deoxy-D-xylulose 5-phosphate: step 1/6. Its function is as follows. Catalyzes the NADPH-dependent rearrangement and reduction of 1-deoxy-D-xylulose-5-phosphate (DXP) to 2-C-methyl-D-erythritol 4-phosphate (MEP). This Psychrobacter sp. (strain PRwf-1) protein is 1-deoxy-D-xylulose 5-phosphate reductoisomerase.